A 686-amino-acid polypeptide reads, in one-letter code: MPASSVRLPLRLLTLAGLLALAGAAALARGAPQGGPPSPQGGPAPTAAPARGPTLFVLVGDGSAGFVFQLGGLGALNDTRIRGHLLGRYLVSYQVVPPPVSAWYFVQRPRERPRLSGPPSGAELVAFDAPGVRRTYTTAAVWPAEVAVLADAEARCPAAVFNVTLGEAFLGLRVALRSFLPLEVIISAERMRMIAPPALGAGLEPPGPPAGRFHVYTLGFLSDGAMHQTMRDVAAYVHESDDYLAQLSAAHAAALAAVVQPGPYYFYRAAVRLGVAAFVFSEAARRDRRASAPALLRVESDARLLSRLLMRAAGCPAGFAGLFDGRAERVPVAPADQLRAAWTFGEDPAPRLDLARATVAEAYRRSVRGKPFDQQALFFAVALLLRAGGPGDARETLLRTTAMCTAERAAAAAELTRAALSPAAAWNEPFSLLDVLSPCAVSLRRDLGGDATLANLGAAARLALAPAGAPGAAAATDEGAEEEEEDPVARAAPEIPAEALLALPLRGGASFVFTRRRPDCGPAYTLGGVDIANPLVLALVSNDSAACDYTDRMPESQHLPATDNPSVCVYCDCVFVRYSSAGTILETVLIESKDMEEQLMAGANSTIPSFNPTLHGGDVKALMLFPNGTVVDLLSFTSTRLAPVSPAYVVASVVGAAITVGILYALFKMLCSFSSEGYSRLINARS.

Residues 1–24 form the signal peptide; sequence MPASSVRLPLRLLTLAGLLALAGA. Residues 25–646 are Virion surface-facing; that stretch reads AALARGAPQG…TSTRLAPVSP (622 aa). N-linked (GlcNAc...) asparagine; by host glycans are attached at residues asparagine 77, asparagine 162, asparagine 542, asparagine 604, and asparagine 627. The interaction with gL stretch occupies residues 157–217; it reads PAAVFNVTLG…PPAGRFHVYT (61 aa). The helical transmembrane segment at 647-667 threads the bilayer; that stretch reads AYVVASVVGAAITVGILYALF. Over 668–686 the chain is Intravirion; the sequence is KMLCSFSSEGYSRLINARS.

Belongs to the herpesviridae glycoprotein H family. Interacts with glycoprotein L (gL); this interaction is necessary for the correct processing and cell surface expression of gH. The heterodimer gH/gL seems to interact with gB trimers during fusion. Post-translationally, N-glycosylated, O-glycosylated, and sialylated.

The protein localises to the virion membrane. It localises to the host cell membrane. The protein resides in the host endosome membrane. Functionally, the heterodimer glycoprotein H-glycoprotein L is required for the fusion of viral and plasma membranes leading to virus entry into the host cell. Following initial binding to host receptor, membrane fusion is mediated by the fusion machinery composed of gB and the heterodimer gH/gL. May also be involved in the fusion between the virion envelope and the outer nuclear membrane during virion morphogenesis. This is Envelope glycoprotein H from Suid herpesvirus 1 (strain Rice) (SuHV-1).